A 103-amino-acid polypeptide reads, in one-letter code: Small ribosomal subunit protein uS10 (103 aa).

This sequence belongs to the universal ribosomal protein uS10 family. In terms of assembly, part of the 30S ribosomal subunit.

Involved in the binding of tRNA to the ribosomes. The protein is Small ribosomal subunit protein uS10 of Chlorobium chlorochromatii (strain CaD3).